Reading from the N-terminus, the 157-residue chain is DNA gyrase inhibitor (157 aa).

Belongs to the DNA gyrase inhibitor family. As to quaternary structure, interacts with DNA gyrase.

Its subcellular location is the cytoplasm. Inhibits the supercoiling activity of DNA gyrase. Acts by inhibiting DNA gyrase at an early step, prior to (or at the step of) binding of DNA by the gyrase. It protects cells against toxins that target DNA gyrase, by inhibiting activity of these toxins and reducing the formation of lethal double-strand breaks in the cell. This chain is DNA gyrase inhibitor, found in Shigella boydii serotype 18 (strain CDC 3083-94 / BS512).